The chain runs to 291 residues: Pyridoxal 5'-phosphate synthase subunit PdxS (291 aa).

Position 23 (aspartate 23) interacts with D-ribose 5-phosphate. Lysine 80 serves as the catalytic Schiff-base intermediate with D-ribose 5-phosphate. A D-ribose 5-phosphate-binding site is contributed by glycine 152. Arginine 164 serves as a coordination point for D-glyceraldehyde 3-phosphate. D-ribose 5-phosphate contacts are provided by residues glycine 213 and 234 to 235 (GS).

The protein belongs to the PdxS/SNZ family. In terms of assembly, in the presence of PdxT, forms a dodecamer of heterodimers.

It catalyses the reaction aldehydo-D-ribose 5-phosphate + D-glyceraldehyde 3-phosphate + L-glutamine = pyridoxal 5'-phosphate + L-glutamate + phosphate + 3 H2O + H(+). The protein operates within cofactor biosynthesis; pyridoxal 5'-phosphate biosynthesis. Catalyzes the formation of pyridoxal 5'-phosphate from ribose 5-phosphate (RBP), glyceraldehyde 3-phosphate (G3P) and ammonia. The ammonia is provided by the PdxT subunit. Can also use ribulose 5-phosphate and dihydroxyacetone phosphate as substrates, resulting from enzyme-catalyzed isomerization of RBP and G3P, respectively. This chain is Pyridoxal 5'-phosphate synthase subunit PdxS, found in Streptococcus pneumoniae (strain P1031).